Reading from the N-terminus, the 481-residue chain is Aspartyl/glutamyl-tRNA(Asn/Gln) amidotransferase subunit B (481 aa).

This sequence belongs to the GatB/GatE family. GatB subfamily. In terms of assembly, heterotrimer of A, B and C subunits.

It carries out the reaction L-glutamyl-tRNA(Gln) + L-glutamine + ATP + H2O = L-glutaminyl-tRNA(Gln) + L-glutamate + ADP + phosphate + H(+). The catalysed reaction is L-aspartyl-tRNA(Asn) + L-glutamine + ATP + H2O = L-asparaginyl-tRNA(Asn) + L-glutamate + ADP + phosphate + 2 H(+). Functionally, allows the formation of correctly charged Asn-tRNA(Asn) or Gln-tRNA(Gln) through the transamidation of misacylated Asp-tRNA(Asn) or Glu-tRNA(Gln) in organisms which lack either or both of asparaginyl-tRNA or glutaminyl-tRNA synthetases. The reaction takes place in the presence of glutamine and ATP through an activated phospho-Asp-tRNA(Asn) or phospho-Glu-tRNA(Gln). In Marinomonas sp. (strain MWYL1), this protein is Aspartyl/glutamyl-tRNA(Asn/Gln) amidotransferase subunit B.